We begin with the raw amino-acid sequence, 367 residues long: tRNA-specific 2-thiouridylase MnmA 2 (367 aa).

Residues 10–17 (GMSGGVDS) and Met36 each bind ATP. Positions 96–98 (NPD) are interaction with target base in tRNA. Cys101 acts as the Nucleophile in catalysis. An intrachain disulfide couples Cys101 to Cys197. Gly125 serves as a coordination point for ATP. An interaction with tRNA region spans residues 147–149 (KDQ). Catalysis depends on Cys197, which acts as the Cysteine persulfide intermediate. The tract at residues 314 to 315 (RY) is interaction with tRNA.

The protein belongs to the MnmA/TRMU family.

It localises to the cytoplasm. It carries out the reaction S-sulfanyl-L-cysteinyl-[protein] + uridine(34) in tRNA + AH2 + ATP = 2-thiouridine(34) in tRNA + L-cysteinyl-[protein] + A + AMP + diphosphate + H(+). In terms of biological role, catalyzes the 2-thiolation of uridine at the wobble position (U34) of tRNA, leading to the formation of s(2)U34. In Aliarcobacter butzleri (strain RM4018) (Arcobacter butzleri), this protein is tRNA-specific 2-thiouridylase MnmA 2.